The primary structure comprises 482 residues: Histone deacetylase 1 (482 aa).

Residues 9–321 are histone deacetylase; the sequence is RKVCYYYDGD…WTYETAVALD (313 aa). Glycine 27 and lysine 31 together coordinate 1D-myo-inositol 1,4,5,6-tetrakisphosphate. The residue at position 74 (lysine 74) is an N6-acetyllysine; alternate. Lysine 74 participates in a covalent cross-link: Glycyl lysine isopeptide (Lys-Gly) (interchain with G-Cter in SUMO2); alternate. The active site involves histidine 141. Residues aspartate 176 and histidine 178 each contribute to the Zn(2+) site. Residue lysine 220 is modified to N6-acetyllysine. Cysteine 261 carries the post-translational modification S-nitrosocysteine. Aspartate 264 lines the Zn(2+) pocket. Arginine 270 is a 1D-myo-inositol 1,4,5,6-tetrakisphosphate binding site. Cysteine 273 is subject to S-nitrosocysteine. Over residues 390–400 the composition is skewed to acidic residues; sequence PEESGDEDEDD. The interval 390–482 is disordered; that stretch reads PEESGDEDED…KGVKEEVKLA (93 aa). Phosphoserine is present on residues serine 393, serine 406, and serine 409. A compositionally biased stretch (basic and acidic residues) spans 401–416; that stretch reads PDKRISICSSDKRIAC. Acidic residues predominate over residues 417–427; that stretch reads EEEFSDSEEEG. Phosphoserine; by CK2 is present on residues serine 421 and serine 423. At lysine 432 the chain carries N6-methylated lysine; by EHMT2. Residue lysine 438 forms a Glycyl lysine isopeptide (Lys-Gly) (interchain with G-Cter in SUMO2) linkage. Basic and acidic residues predominate over residues 443–482; it reads VKTEDEKEKDPEEKKEVTEEEKTKEEKPEAKGVKEEVKLA. A Glycyl lysine isopeptide (Lys-Gly) (interchain with G-Cter in SUMO2); alternate cross-link involves residue lysine 444. A Glycyl lysine isopeptide (Lys-Gly) (interchain with G-Cter in SUMO); alternate cross-link involves residue lysine 444. Glycyl lysine isopeptide (Lys-Gly) (interchain with G-Cter in SUMO2) cross-links involve residues lysine 456, lysine 457, and lysine 473. A Glycyl lysine isopeptide (Lys-Gly) (interchain with G-Cter in SUMO2); alternate cross-link involves residue lysine 476. Lysine 476 is covalently cross-linked (Glycyl lysine isopeptide (Lys-Gly) (interchain with G-Cter in SUMO); alternate). Lysine 480 is covalently cross-linked (Glycyl lysine isopeptide (Lys-Gly) (interchain with G-Cter in SUMO2)).

Belongs to the histone deacetylase family. HD type 1 subfamily. Part of the core histone deacetylase (HDAC) complex composed of HDAC1, HDAC2, RBBP4 and RBBP7, the core complex associates with SIN3, SAP18 and SAP30 to form the SIN3 HDAC complex. Component of the nucleosome remodeling and deacetylase (NuRD) repressor complex, composed of core proteins MTA1, MTA2, MTA3, RBBP4, RBBP7, HDAC1, HDAC2, MBD2, MBD3, and peripherally associated proteins CDK2AP1, CDK2AP2, GATAD2A, GATAD2B, CHD3, CHD4 and CHD5. The exact stoichiometry of the NuRD complex is unknown, and some subunits such as MBD2 and MBD3, GATAD2A and GATAD2B, and CHD3, CHD4 and CHD5 define mutually exclusive NuRD complexes. Component of a BHC histone deacetylase complex that contains HDAC1, HDAC2, HMG20B/BRAF35, KDM1A, RCOR1/CoREST and PHF21A/BHC80. The BHC complex may also contain ZMYM2, ZNF217, ZMYM3, GSE1 and GTF2I. Component of a mSin3A corepressor complex that contains SIN3A, SAP130, SUDS3/SAP45, ARID4B/SAP180, HDAC1 and HDAC2. Component of the SIN3B complex, which includes SIN3B, HDAC1, PHF12 and MORF4L1. Found in a trimeric complex with APBB1 and TSHZ3; the interaction between HDAC1 and APBB1 is mediated by TSHZ3. Forms a complex comprising APPL1, RUVBL2, APPL2, CTNNB1 and HDAC2. Component of a RCOR/GFI/KDM1A/HDAC complex. Part of a complex composed of TRIM28, HDAC1, HDAC2 and EHMT2. Part of a complex containing at least CDYL, MIER1, MIER2, HDAC1 and HDAC2. The large PER complex involved in the histone deacetylation is composed of at least HDAC1, PER2, SFPQ and SIN3A. Associates with the 9-1-1 complex; interacts with HUS1. Found in a complex with DNMT3A and HDAC7. Found in a complex with YY1, SIN3A and GON4L. Identified in a histone deacetylase complex that contains DNTTIP1, HDAC1 and MIDEAS; this complex assembles into a tetramer that contains four copies of each protein chain. Found in a complex composed of at least SINHCAF, SIN3A, HDAC1, SAP30, RBBP4, OGT and TET1. Interacts with GFI1; the interaction is direct. Interacts directly with GFI1B. Interacts with TSHZ3 (via N-terminus); the interaction is direct. Interacts with APEX1; the interaction is not dependent on the acetylated status of APEX1. Interacts with BANP. Interacts with BAZ2A/TIP5. Interacts with BCL6. Interacts with BCOR. Interacts with BHLHE40/DEC1. Interacts with BRCC3; this interaction is enhanced in the presence of PWWP2B. Interacts with BRMS1. Interacts with BRMS1L. Interacts with C10orf90/FATS (via its N-terminal); the interaction prevents binding of HDAC1 to CDKN1A/p21 and facilitates the acetylation and stabilization of CDKN1A/p21. Interacts with CBFA2T3. Interacts with CCAR2. Interacts with CDK2AP1. Interacts with CHD3. Interacts with CHD4. Interacts with CHFR. Interacts with CIART. Interacts with CDKN1A/p21. Interacts with CDK5 complexed to CDK5R1 (p25). Interacts with CRY1. Interacts with DAXX. Interacts with DDIT3/CHOP. Interacts with DDX5. Interacts with DHX36; this interaction occurs in a RNA-dependent manner. Interacts with DNMT1. Interacts with DNTTIP1. Interacts with E4F1. Interacts with EP300. Interacts with ERCC6. Interacts with GATAD2A. Interacts with HCFC1. Interacts with HDAC9. Interacts with HUS1. Interacts with INSM1. Interacts with KDM4A. Interacts with KDM5A; this interaction impairs histone deacetylation. Interacts with KDM5B. Interacts with KLF1. Interacts with MBD3L2. Interacts with MIER1. Interacts with NFE4. Interacts with NR4A2/NURR1. Interacts with NR1D2 (via C-terminus). Interacts with NRIP1. Interacts with NSD2. Interacts with PACS2. Interacts with PHB2. Interacts with PPHLN1. Interacts with PRDM6. Interacts with PRDM16. Interacts with PWWP2A in a MTA1-dependent manner. Interacts with PWWP2B. Interacts with RB1. Interacts with RERE. Interacts with SANBR (via the BTB domain). Interacts with SAMSN1. Interacts with SAP30L. Interacts with SETDB1. Interacts with SIN3A. Interacts with SMAD3. Interacts with SMAD4; positively regulated by ZBTB7A. Interacts with SMARCAD1. Interacts with SMARCA4/BRG1. Interacts with SMYD2. Interacts with SMYD4 (via MYND-type zinc finger). Interacts with SP1; the interaction deacetylates SP1 and regulates its transcriptional activity. Interacts with SP3; the interaction deacetylates SP3 and regulates its transcriptional activity. In vitro, C(18) ceramides increase this interaction and the subsequent SP3 deacetylation and SP3-mediated repression of the TERT promoter. Interacts with SPEN/MINT. Interacts with SPHK2. Interacts with SUV39H1. Interacts with TGIF. Interacts with TGIF2. Interacts with TRAF6. Interacts with TRIM28; the interaction recruits HDAC1 to E2F1 and inhibits its acetylation. Interacts with TSC22D3 isoform 1; this interaction affects HDAC1 activity on MYOG promoter and thus inhibits MYOD1 transcriptional activity. Interacts with UHRF1. Interacts with UHRF2. Interacts with ZBTB7A. Interacts with ZMYND8. Interacts with ZMYND15. Interacts with ZNF431. Interacts with ZNF516; this interaction is enhanced in the presence of PWWP2B. Interacts with ZNF541. Interacts with ZNF638. Interacts with ZNHIT1. Interacts with the non-histone region of MACROH2A1. Identified in a complex with HDAC2, KCTD19, DNTTIP1 and ZNF541. Interacts with VRK1. As to quaternary structure, (Microbial infection) Interacts with SV40 large T antigen. The cofactor is Zn(2+). Post-translationally, sumoylated on Lys-444 and Lys-476; which promotes enzymatic activity. Desumoylated by SENP1. In terms of processing, phosphorylation on Ser-421 and Ser-423 promotes enzymatic activity and interactions with NuRD and SIN3 complexes. Phosphorylated by CDK5. Ubiquitinated by CHFR, leading to its degradation by the proteasome. Ubiquitinated by KCTD11, leading to proteasomal degradation. As to expression, ubiquitous, with higher levels in heart, pancreas and testis, and lower levels in kidney and brain.

Its subcellular location is the nucleus. It catalyses the reaction N(6)-acetyl-L-lysyl-[histone] + H2O = L-lysyl-[histone] + acetate. The enzyme catalyses N(6)-acetyl-L-lysyl-[protein] + H2O = L-lysyl-[protein] + acetate. The catalysed reaction is N(6)-(2E)-butenoyl-L-lysyl-[protein] + H2O = (2E)-2-butenoate + L-lysyl-[protein]. It carries out the reaction N(6)-[(S)-lactoyl]-L-lysyl-[protein] + H2O = (S)-lactate + L-lysyl-[protein]. Inositol tetraphosphate (1D-myo-inositol 1,4,5,6-tetrakisphosphate) may act as an intermolecular glue between HDAC1 and N-Cor repressor complex components. Its function is as follows. Histone deacetylase that catalyzes the deacetylation of lysine residues on the N-terminal part of the core histones (H2A, H2B, H3 and H4). Histone deacetylation gives a tag for epigenetic repression and plays an important role in transcriptional regulation, cell cycle progression and developmental events. Histone deacetylases act via the formation of large multiprotein complexes. Acts as a component of the histone deacetylase NuRD complex which participates in the remodeling of chromatin. As part of the SIN3B complex is recruited downstream of the constitutively active genes transcriptional start sites through interaction with histones and mitigates histone acetylation and RNA polymerase II progression within transcribed regions contributing to the regulation of transcription. Also functions as a deacetylase for non-histone targets, such as NR1D2, RELA, SP1, SP3, STAT3 and TSHZ3. Deacetylates SP proteins, SP1 and SP3, and regulates their function. Component of the BRG1-RB1-HDAC1 complex, which negatively regulates the CREST-mediated transcription in resting neurons. Upon calcium stimulation, HDAC1 is released from the complex and CREBBP is recruited, which facilitates transcriptional activation. Deacetylates TSHZ3 and regulates its transcriptional repressor activity. Deacetylates 'Lys-310' in RELA and thereby inhibits the transcriptional activity of NF-kappa-B. Deacetylates NR1D2 and abrogates the effect of KAT5-mediated relieving of NR1D2 transcription repression activity. Component of a RCOR/GFI/KDM1A/HDAC complex that suppresses, via histone deacetylase (HDAC) recruitment, a number of genes implicated in multilineage blood cell development. Involved in CIART-mediated transcriptional repression of the circadian transcriptional activator: CLOCK-BMAL1 heterodimer. Required for the transcriptional repression of circadian target genes, such as PER1, mediated by the large PER complex or CRY1 through histone deacetylation. In addition to protein deacetylase activity, also has protein-lysine deacylase activity: acts as a protein decrotonylase and delactylase by mediating decrotonylation ((2E)-butenoyl) and delactylation (lactoyl) of histones, respectively. This is Histone deacetylase 1 from Homo sapiens (Human).